The sequence spans 216 residues: Urease accessory protein UreG (216 aa).

25-32 (GPVGSGKT) contributes to the GTP binding site.

It belongs to the SIMIBI class G3E GTPase family. UreG subfamily. Homodimer. UreD, UreF and UreG form a complex that acts as a GTP-hydrolysis-dependent molecular chaperone, activating the urease apoprotein by helping to assemble the nickel containing metallocenter of UreC. The UreE protein probably delivers the nickel.

Its subcellular location is the cytoplasm. In terms of biological role, facilitates the functional incorporation of the urease nickel metallocenter. This process requires GTP hydrolysis, probably effectuated by UreG. This Burkholderia mallei (strain NCTC 10247) protein is Urease accessory protein UreG.